The primary structure comprises 464 residues: Bifunctional protein GlmU (464 aa).

Residues 1-231 (MDVVIMAAGK…ATQVAGVNSP (231 aa)) are pyrophosphorylase. UDP-N-acetyl-alpha-D-glucosamine is bound by residues lysine 20, glutamine 78, 83 to 84 (GT), 105 to 107 (SGD), glycine 142, glutamate 156, and asparagine 229. Position 107 (aspartate 107) interacts with Mg(2+). Asparagine 229 is a binding site for Mg(2+). The segment at 232–252 (VQLAALERAFQSKVALQLMEQ) is linker. Positions 253-464 (GVRLADPARL…SIANWKRPSK (212 aa)) are N-acetyltransferase. UDP-N-acetyl-alpha-D-glucosamine is bound by residues arginine 343 and lysine 361. The active-site Proton acceptor is the histidine 373. Residues tyrosine 376 and asparagine 387 each coordinate UDP-N-acetyl-alpha-D-glucosamine. Acetyl-CoA is bound by residues alanine 390, 396 to 397 (NY), serine 415, glycine 433, and arginine 450.

In the N-terminal section; belongs to the N-acetylglucosamine-1-phosphate uridyltransferase family. The protein in the C-terminal section; belongs to the transferase hexapeptide repeat family. As to quaternary structure, homotrimer. Requires Mg(2+) as cofactor.

It localises to the cytoplasm. The catalysed reaction is alpha-D-glucosamine 1-phosphate + acetyl-CoA = N-acetyl-alpha-D-glucosamine 1-phosphate + CoA + H(+). It catalyses the reaction N-acetyl-alpha-D-glucosamine 1-phosphate + UTP + H(+) = UDP-N-acetyl-alpha-D-glucosamine + diphosphate. The protein operates within nucleotide-sugar biosynthesis; UDP-N-acetyl-alpha-D-glucosamine biosynthesis; N-acetyl-alpha-D-glucosamine 1-phosphate from alpha-D-glucosamine 6-phosphate (route II): step 2/2. It participates in nucleotide-sugar biosynthesis; UDP-N-acetyl-alpha-D-glucosamine biosynthesis; UDP-N-acetyl-alpha-D-glucosamine from N-acetyl-alpha-D-glucosamine 1-phosphate: step 1/1. Its pathway is bacterial outer membrane biogenesis; LPS lipid A biosynthesis. Functionally, catalyzes the last two sequential reactions in the de novo biosynthetic pathway for UDP-N-acetylglucosamine (UDP-GlcNAc). The C-terminal domain catalyzes the transfer of acetyl group from acetyl coenzyme A to glucosamine-1-phosphate (GlcN-1-P) to produce N-acetylglucosamine-1-phosphate (GlcNAc-1-P), which is converted into UDP-GlcNAc by the transfer of uridine 5-monophosphate (from uridine 5-triphosphate), a reaction catalyzed by the N-terminal domain. This Albidiferax ferrireducens (strain ATCC BAA-621 / DSM 15236 / T118) (Rhodoferax ferrireducens) protein is Bifunctional protein GlmU.